The primary structure comprises 475 residues: ATP synthase subunit beta (475 aa).

Position 148 to 155 (148 to 155 (GGAGVGKT)) interacts with ATP.

This sequence belongs to the ATPase alpha/beta chains family. As to quaternary structure, F-type ATPases have 2 components, CF(1) - the catalytic core - and CF(0) - the membrane proton channel. CF(1) has five subunits: alpha(3), beta(3), gamma(1), delta(1), epsilon(1). CF(0) has three main subunits: a(1), b(2) and c(9-12). The alpha and beta chains form an alternating ring which encloses part of the gamma chain. CF(1) is attached to CF(0) by a central stalk formed by the gamma and epsilon chains, while a peripheral stalk is formed by the delta and b chains.

It is found in the cell inner membrane. The enzyme catalyses ATP + H2O + 4 H(+)(in) = ADP + phosphate + 5 H(+)(out). Its function is as follows. Produces ATP from ADP in the presence of a proton gradient across the membrane. The catalytic sites are hosted primarily by the beta subunits. This Psychrobacter sp. (strain PRwf-1) protein is ATP synthase subunit beta.